A 467-amino-acid chain; its full sequence is MRLPREIGPIHFVGIGGIGMSGIAEVLCNLGYTVQGSDASEGANVVRLRDKGIKVTVGHRAENVSGADVLVVSTAIRRDNPELMAARAQRIPVVRRAEMLAELMRLKSCVAIAGTHGKTTTTSMVAALLDAGDFDPTVINGGIINAYGTNARLGAGEWMVVEADESDGTFLKLPTDVAIVTNVDPEHLDHFKTFDAVQDAFRSFVENVPFYGFAVMCIDHPVVQSMVGRIEDRRIVTYGENPQADARLVDLAPNGGGSHFKVVFRNRKTDAAHEVSDLVLPMPGRHNALNATAAIAVAHELGIPDATIRKAIAAFGGVKRRFTKTGEWNGVTIIDDYGHHPVEIAAVLKAARESTGGKVVAVVQPHRYTRLQSLFEEFCTCFNDADTVVVAEVYPAGEAPIAGIDRDHFVLGLRAHGHREVVPLQEPAALAGVIAGLAKPGDYVVCLGAGNITQWAYALPGELKALG.

114–120 (GTHGKTT) contacts ATP.

It belongs to the MurCDEF family.

The protein resides in the cytoplasm. The catalysed reaction is UDP-N-acetyl-alpha-D-muramate + L-alanine + ATP = UDP-N-acetyl-alpha-D-muramoyl-L-alanine + ADP + phosphate + H(+). It participates in cell wall biogenesis; peptidoglycan biosynthesis. Functionally, cell wall formation. The sequence is that of UDP-N-acetylmuramate--L-alanine ligase from Nitrobacter hamburgensis (strain DSM 10229 / NCIMB 13809 / X14).